We begin with the raw amino-acid sequence, 204 residues long: Holliday junction branch migration complex subunit RuvA (204 aa).

Residues 1–64 are domain I; sequence MIGRLQGKLI…EDAHLLFGFS (64 aa). The domain II stretch occupies residues 65 to 143; sequence TKTDRTLFRE…GLRQPDFFVE (79 aa). Residues 144 to 155 are flexible linker; it reads SKHITVPDIVSA. Positions 156–204 are domain III; sequence EKETPNDEAVAALVALGYKPPEAAKMVKKVANGDLTSEQLIREALKAAL.

Belongs to the RuvA family. Homotetramer. Forms an RuvA(8)-RuvB(12)-Holliday junction (HJ) complex. HJ DNA is sandwiched between 2 RuvA tetramers; dsDNA enters through RuvA and exits via RuvB. An RuvB hexamer assembles on each DNA strand where it exits the tetramer. Each RuvB hexamer is contacted by two RuvA subunits (via domain III) on 2 adjacent RuvB subunits; this complex drives branch migration. In the full resolvosome a probable DNA-RuvA(4)-RuvB(12)-RuvC(2) complex forms which resolves the HJ.

It localises to the cytoplasm. The RuvA-RuvB-RuvC complex processes Holliday junction (HJ) DNA during genetic recombination and DNA repair, while the RuvA-RuvB complex plays an important role in the rescue of blocked DNA replication forks via replication fork reversal (RFR). RuvA specifically binds to HJ cruciform DNA, conferring on it an open structure. The RuvB hexamer acts as an ATP-dependent pump, pulling dsDNA into and through the RuvAB complex. HJ branch migration allows RuvC to scan DNA until it finds its consensus sequence, where it cleaves and resolves the cruciform DNA. The sequence is that of Holliday junction branch migration complex subunit RuvA from Actinobacillus succinogenes (strain ATCC 55618 / DSM 22257 / CCUG 43843 / 130Z).